Reading from the N-terminus, the 427-residue chain is Carboxyl-terminal-processing protease (427 aa).

The first 31 residues, 1–31 (MGKRTRRFWALAFSLLMGALIYLGNTPSALA), serve as a signal peptide directing secretion. Positions 104 to 186 (NLQVTTTGEL…TKVSLEILSA (83 aa)) constitute a PDZ domain. Residues Ser313, Asp324, and Lys338 each act as charge relay system in the active site.

It belongs to the peptidase S41A family.

The protein resides in the cellular thylakoid lumen. The enzyme catalyses The enzyme shows specific recognition of a C-terminal tripeptide, Xaa-Yaa-Zaa, in which Xaa is preferably Ala or Leu, Yaa is preferably Ala or Tyr, and Zaa is preferably Ala, but then cleaves at a variable distance from the C-terminus. A typical cleavage is -Ala-Ala-|-Arg-Ala-Ala-Lys-Glu-Asn-Tyr-Ala-Leu-Ala-Ala.. Cleavage of the 16 C-terminal residues from the D1 precursor of photosystem II (PSII). This proteolytic processing is necessary to allow the light-driven assembly of the oxygen-evolving cluster (a tetranuclear manganese), which is responsible for photosynthetic water oxidation. This Synechocystis sp. (strain ATCC 27184 / PCC 6803 / Kazusa) protein is Carboxyl-terminal-processing protease (ctpA).